A 159-amino-acid chain; its full sequence is Ribosomal RNA large subunit methyltransferase H (159 aa).

Residues leucine 76, glycine 108, and 127-132 contribute to the S-adenosyl-L-methionine site; that span reads FGLLTL.

The protein belongs to the RNA methyltransferase RlmH family. As to quaternary structure, homodimer.

It localises to the cytoplasm. The enzyme catalyses pseudouridine(1915) in 23S rRNA + S-adenosyl-L-methionine = N(3)-methylpseudouridine(1915) in 23S rRNA + S-adenosyl-L-homocysteine + H(+). Functionally, specifically methylates the pseudouridine at position 1915 (m3Psi1915) in 23S rRNA. The sequence is that of Ribosomal RNA large subunit methyltransferase H from Streptococcus pyogenes serotype M12 (strain MGAS2096).